The primary structure comprises 189 residues: MyoD family inhibitor domain-containing protein 2 (189 aa).

The region spanning 28-188 is the MDFI domain; the sequence is KEDTQLTNAK…LAMEISEICY (161 aa).

The protein belongs to the MDFI family.

This is MyoD family inhibitor domain-containing protein 2 from Homo sapiens (Human).